A 232-amino-acid chain; its full sequence is Phosphatidylserine decarboxylase proenzyme (232 aa).

The active-site Schiff-base intermediate with substrate; via pyruvic acid is serine 190. Position 190 is a pyruvic acid (Ser); by autocatalysis (serine 190).

The protein belongs to the phosphatidylserine decarboxylase family. PSD-A subfamily. As to quaternary structure, heterodimer of a large membrane-associated beta subunit and a small pyruvoyl-containing alpha subunit. Pyruvate serves as cofactor. Is synthesized initially as an inactive proenzyme. Formation of the active enzyme involves a self-maturation process in which the active site pyruvoyl group is generated from an internal serine residue via an autocatalytic post-translational modification. Two non-identical subunits are generated from the proenzyme in this reaction, and the pyruvate is formed at the N-terminus of the alpha chain, which is derived from the carboxyl end of the proenzyme. The post-translation cleavage follows an unusual pathway, termed non-hydrolytic serinolysis, in which the side chain hydroxyl group of the serine supplies its oxygen atom to form the C-terminus of the beta chain, while the remainder of the serine residue undergoes an oxidative deamination to produce ammonia and the pyruvoyl prosthetic group on the alpha chain.

The protein localises to the cell membrane. It catalyses the reaction a 1,2-diacyl-sn-glycero-3-phospho-L-serine + H(+) = a 1,2-diacyl-sn-glycero-3-phosphoethanolamine + CO2. It participates in phospholipid metabolism; phosphatidylethanolamine biosynthesis; phosphatidylethanolamine from CDP-diacylglycerol: step 2/2. Catalyzes the formation of phosphatidylethanolamine (PtdEtn) from phosphatidylserine (PtdSer). The chain is Phosphatidylserine decarboxylase proenzyme from Cereibacter sphaeroides (strain ATCC 17025 / ATH 2.4.3) (Rhodobacter sphaeroides).